We begin with the raw amino-acid sequence, 259 residues long: HTH-type transcriptional regulator Rv1719 (259 aa).

The HTH iclR-type domain occupies 13 to 75 (IQVIARAAEL…GARGPYRLGP (63 aa)). A DNA-binding region (H-T-H motif) is located at residues 35–54 (QAEIGERVGMARSTVSRILN). An IclR-ED domain is found at 88–259 (VVTEMHPFLT…AWFNGTEDRK (172 aa)).

As to quaternary structure, homodimer.

Functionally, binds to the upstream region of Rv1714 and probably modulates the expression of the downstream gene(s). This Mycobacterium tuberculosis (strain ATCC 25618 / H37Rv) protein is HTH-type transcriptional regulator Rv1719.